A 1764-amino-acid chain; its full sequence is Cilia- and flagella-associated protein 44 (1764 aa).

WD repeat units lie at residues Gly115–Arg157, Ala160–Lys199, Gly208–Thr248, Cys255–Pro294, His361–Glu400, Ala454–Thr493, and Val495–Leu534. The disordered stretch occupies residues Gln570 to Leu654. Over residues Lys575–Gly584 the composition is skewed to basic residues. Composition is skewed to basic and acidic residues over residues Lys585–Gly596 and Gly604–Ala628. A compositionally biased stretch (acidic residues) spans Glu629 to Asp641. 3 WD repeats span residues Ser649 to Ala692, Ala707 to Met752, and Gln753 to Pro791. Positions Tyr821–Leu850 form a coiled coil. 2 disordered regions span residues Ala972–Ala1003 and Lys1426–Gly1468. The segment covering Gly1434 to Glu1462 has biased composition (acidic residues). Coiled coils occupy residues Asp1479–Gln1517, Leu1567–Ile1674, and Glu1729–Lys1758.

It belongs to the CFAP44 family.

Its subcellular location is the cell projection. It is found in the cilium. The protein resides in the flagellum. The protein localises to the cytoplasm. It localises to the cytoskeleton. Its subcellular location is the flagellum axoneme. Functionally, flagellar protein involved in sperm flagellum axoneme organization and function. In Chlamydomonas reinhardtii (Chlamydomonas smithii), this protein is Cilia- and flagella-associated protein 44.